We begin with the raw amino-acid sequence, 429 residues long: Ribosomal RNA small subunit methyltransferase B (429 aa).

S-adenosyl-L-methionine is bound by residues 254-260 (CAAPGGK), Asp277, Asp303, and Asp322. Catalysis depends on Cys375, which acts as the Nucleophile.

This sequence belongs to the class I-like SAM-binding methyltransferase superfamily. RsmB/NOP family.

The protein localises to the cytoplasm. It catalyses the reaction cytidine(967) in 16S rRNA + S-adenosyl-L-methionine = 5-methylcytidine(967) in 16S rRNA + S-adenosyl-L-homocysteine + H(+). Functionally, specifically methylates the cytosine at position 967 (m5C967) of 16S rRNA. The sequence is that of Ribosomal RNA small subunit methyltransferase B from Shigella sonnei (strain Ss046).